Consider the following 60-residue polypeptide: DNA gyrase inhibitor YacG (60 aa).

C3, C6, C18, and C22 together coordinate Zn(2+). The disordered stretch occupies residues 38–60 (PASSEDEEEPLDQEAETPVAPRH). Residues 41–52 (SEDEEEPLDQEA) show a composition bias toward acidic residues.

It belongs to the DNA gyrase inhibitor YacG family. In terms of assembly, interacts with GyrB. Requires Zn(2+) as cofactor.

Its function is as follows. Inhibits all the catalytic activities of DNA gyrase by preventing its interaction with DNA. Acts by binding directly to the C-terminal domain of GyrB, which probably disrupts DNA binding by the gyrase. This Ruegeria pomeroyi (strain ATCC 700808 / DSM 15171 / DSS-3) (Silicibacter pomeroyi) protein is DNA gyrase inhibitor YacG.